Consider the following 2322-residue polypeptide: Chondroitin sulfate proteoglycan 4 (2322 aa).

The signal sequence occupies residues 1–29; that stretch reads MQSGPRPPLPAPGLALALTLTMLARLASA. Laminin G-like domains are found at residues 30–192 and 202–380; these read ASFF…HEGC and VALG…AAGC. The globular or compact configuration stabilized by disulfide bonds stretch occupies residues 30–639; that stretch reads ASFFGENHLE…HRGGPAQDLT (610 aa). The interval 30 to 639 is neurite growth inhibition; it reads ASFFGENHLE…HRGGPAQDLT (610 aa). The Extracellular portion of the chain corresponds to 30–2224; sequence ASFFGENHLE…LSFLEANMFS (2195 aa). Asn-130 carries N-linked (GlcNAc...) asparagine glycosylation. A disulfide bond links Cys-169 and Cys-192. N-linked (GlcNAc...) asparagine glycosylation is present at Asn-348. A disulfide bond links Cys-354 and Cys-380. Residue Asn-427 is glycosylated (N-linked (GlcNAc...) asparagine). 3 CSPG repeats span residues 428-523, 553-645, and 662-764; these read FTQL…LEVS, PHII…VSDG, and AIQI…LEVQ. Residues 574-1040 are interaction with COL6A2; sequence GPEVFQAYDP…RGGRRLLTTD (467 aa). Positions 631 to 1446 are interaction with COL5A1; it reads RGGPAQDLTF…SETLTDSFVL (816 aa). N-linked (GlcNAc...) asparagine glycosylation is found at Asn-685 and Asn-772. CSPG repeat units follow at residues 783–878 and 898–989; these read TVWM…FRVT and DAPV…FVAT. O-linked (Xyl...) (chondroitin sulfate) serine glycosylation is present at Ser-995. 9 CSPG repeats span residues 1018–1110, 1126–1216, 1238–1337, 1356–1449, 1473–1563, 1581–1679, 1704–1803, 1832–1924, and 1941–2029; these read APVQ…VSDG, YLRV…FSVE, PLKL…LDVA, AAIP…LMAN, PPIL…LSDG, LLSL…LQLS, PSHL…FRAH, PPQP…MSDG, and AIEV…VLAL. Residues Asn-1131 and Asn-1202 are each glycosylated (N-linked (GlcNAc...) asparagine). N-linked (GlcNAc...) asparagine glycans are attached at residues Asn-1364 and Asn-1449. The segment at 1586–2221 is neurite growth inhibition; the sequence is GSQTLTVCPG…GGFLSFLEAN (636 aa). The segment at 1587–2221 is cysteine-containing; that stretch reads SQTLTVCPGS…GGFLSFLEAN (635 aa). An N-linked (GlcNAc...) asparagine glycan is attached at Asn-1645. Asn-1909, Asn-2016, Asn-2034, Asn-2040, and Asn-2075 each carry an N-linked (GlcNAc...) asparagine glycan. The stretch at 2038–2147 is one CSPG 15 repeat; the sequence is VVNVTVRALL…AGDSLTLELW (110 aa). The disordered stretch occupies residues 2182-2206; sequence ARTEAGKPESSTPTGEPGPMASSPE. The chain crosses the membrane as a helical span at residues 2225–2245; it reads VIIPMCLVLLLLALILPLLFY. Residues 2246 to 2322 lie on the Cytoplasmic side of the membrane; that stretch reads LRKRNKTGKH…PALKNGQYWV (77 aa). Position 2252 is a phosphothreonine; by PKC/PRKCA (Thr-2252). Positions 2320–2322 match the PDZ-binding motif; sequence YWV.

In terms of assembly, interacts with the first PDZ domain of MPDZ. Interacts with PRKCA. Binds TNC, laminin-1, COL5A1 and COL6A2. Interacts with PLG and angiostatin. Binds FGF2 and PDGFA. Interacts with GRIP1, GRIP2 and GRIA2. Forms a ternary complex with GRIP1 and GRIA2. Interacts with LGALS3 and the integrin composed of ITGB1 and ITGA3. Interacts with ITGA4 through its chondroitin sulfate glycosaminoglycan. Interacts with BCAR1, CDC42 and ACK1. Interacts with MMP16. As to quaternary structure, (Microbial infection) Interacts with C.difficile toxin TcdB, suggesting that it may act as a receptor for TcdB. O-glycosylated; contains glycosaminoglycan chondroitin sulfate which are required for proper localization and function in stress fiber formation. Involved in interaction with MMP16 and ITGA4. Post-translationally, phosphorylation by PRKCA regulates its subcellular location and function in cell motility. Detected in fibroblasts (at protein level). Detected in placenta (at protein level). Detected in malignant melanoma cells.

Its subcellular location is the cell membrane. The protein resides in the apical cell membrane. It localises to the cell projection. The protein localises to the lamellipodium membrane. It is found in the cell surface. Proteoglycan playing a role in cell proliferation and migration which stimulates endothelial cells motility during microvascular morphogenesis. May also inhibit neurite outgrowth and growth cone collapse during axon regeneration. Cell surface receptor for collagen alpha 2(VI) which may confer cells ability to migrate on that substrate. Binds through its extracellular N-terminus growth factors, extracellular matrix proteases modulating their activity. May regulate MPP16-dependent degradation and invasion of type I collagen participating in melanoma cells invasion properties. May modulate the plasminogen system by enhancing plasminogen activation and inhibiting angiostatin. Also functions as a signal transducing protein by binding through its cytoplasmic C-terminus scaffolding and signaling proteins. May promote retraction fiber formation and cell polarization through Rho GTPase activation. May stimulate alpha-4, beta-1 integrin-mediated adhesion and spreading by recruiting and activating a signaling cascade through CDC42, ACK1 and BCAR1. May activate FAK and ERK1/ERK2 signaling cascades. In Homo sapiens (Human), this protein is Chondroitin sulfate proteoglycan 4 (CSPG4).